The following is a 539-amino-acid chain: Sphingosine-1-phosphate lyase (539 aa).

The first 46 residues, 1–46 (MELAMDFALRLRDAANHHLSRYEPLVLLAAPLLALLAARTLHAAAA), serve as a signal peptide directing secretion. Topologically, residues 47–54 (AVADRGLR) are lumenal. The chain crosses the membrane as a helical span at residues 55 to 75 (TVLLALAMTAIKLLPGVSAYI). Over 76 to 539 (NAEKRKVVDQ…LLVEFMDASC (464 aa)) the chain is Cytoplasmic. Lys-344 bears the N6-(pyridoxal phosphate)lysine mark.

Belongs to the group II decarboxylase family. Sphingosine-1-phosphate lyase subfamily. Pyridoxal 5'-phosphate is required as a cofactor.

The protein localises to the endoplasmic reticulum membrane. The enzyme catalyses sphinganine 1-phosphate = hexadecanal + phosphoethanolamine. It functions in the pathway lipid metabolism; sphingolipid metabolism. Cleaves phosphorylated sphingoid bases (PSBs), such as sphingosine-1-phosphate, into fatty aldehydes and phosphoethanolamine. Elevates stress-induced ceramide production and apoptosis. The polypeptide is Sphingosine-1-phosphate lyase (SPL) (Oryza sativa subsp. japonica (Rice)).